We begin with the raw amino-acid sequence, 644 residues long: DNA mismatch repair protein MutL (644 aa).

Disordered regions lie at residues 338 to 390 and 416 to 445; these read RPNA…ERPA and QPQE…DDTQ. 2 stretches are compositionally biased toward low complexity: residues 349 to 366 and 416 to 427; these read EATP…EASA and QPQEAAEEAAGT.

The protein belongs to the DNA mismatch repair MutL/HexB family.

In terms of biological role, this protein is involved in the repair of mismatches in DNA. It is required for dam-dependent methyl-directed DNA mismatch repair. May act as a 'molecular matchmaker', a protein that promotes the formation of a stable complex between two or more DNA-binding proteins in an ATP-dependent manner without itself being part of a final effector complex. In Chromohalobacter salexigens (strain ATCC BAA-138 / DSM 3043 / CIP 106854 / NCIMB 13768 / 1H11), this protein is DNA mismatch repair protein MutL.